A 98-amino-acid polypeptide reads, in one-letter code: NADH-ubiquinone oxidoreductase chain 4L (98 aa).

3 consecutive transmembrane segments (helical) span residues 1-21 (MSLTYMNMLLAFMISLMGLLM), 29-49 (SLLCLEGMMLSLFVMMTVTIL), and 61-81 (IILLVFAACEAALGLSLLVMV).

The protein belongs to the complex I subunit 4L family. As to quaternary structure, core subunit of respiratory chain NADH dehydrogenase (Complex I) which is composed of 45 different subunits.

Its subcellular location is the mitochondrion inner membrane. It carries out the reaction a ubiquinone + NADH + 5 H(+)(in) = a ubiquinol + NAD(+) + 4 H(+)(out). Its function is as follows. Core subunit of the mitochondrial membrane respiratory chain NADH dehydrogenase (Complex I) which catalyzes electron transfer from NADH through the respiratory chain, using ubiquinone as an electron acceptor. Part of the enzyme membrane arm which is embedded in the lipid bilayer and involved in proton translocation. This Sturnira lilium (Lesser yellow-shouldered bat) protein is NADH-ubiquinone oxidoreductase chain 4L (MT-ND4L).